We begin with the raw amino-acid sequence, 283 residues long: Lectin-like protein At1g53080 (283 aa).

A signal peptide spans 1-23; the sequence is MQIHKLCIFVLFISLLSSKTISA. A legume-lectin like region spans residues 24–277; it reads VKFNFNRFDG…RHDIWSWSFE (254 aa). N-linked (GlcNAc...) asparagine glycosylation is found at N84 and N138. At S247 the chain carries Phosphoserine.

It belongs to the leguminous lectin family.

The protein resides in the secreted. It localises to the extracellular space. It is found in the apoplast. In Arabidopsis thaliana (Mouse-ear cress), this protein is Lectin-like protein At1g53080.